The following is a 30-amino-acid chain: NADH-ubiquinone oxidoreductase 18 kDa subunit (30 aa).

In terms of assembly, complex I is composed of about 45 different subunits.

The protein localises to the mitochondrion inner membrane. The catalysed reaction is a ubiquinone + NADH + 5 H(+)(in) = a ubiquinol + NAD(+) + 4 H(+)(out). Transfer of electrons from NADH to the respiratory chain. The immediate electron acceptor for the enzyme is believed to be ubiquinone. This is NADH-ubiquinone oxidoreductase 18 kDa subunit from Solanum tuberosum (Potato).